Reading from the N-terminus, the 294-residue chain is Glucosamine kinase GspK (294 aa).

ATP is bound at residue T12. D101 is a binding site for substrate. An ATP-binding site is contributed by T122. Substrate is bound by residues 139–141 and D146; that span reads GRE. Residue G202 coordinates ATP.

This sequence belongs to the eukaryotic-type N-acetylglucosamine kinase family.

It is found in the cytoplasm. The catalysed reaction is D-glucosamine + ATP = D-glucosamine 6-phosphate + ADP + H(+). Its function is as follows. ATP-dependent kinase, which is specific for glucosamine. Does not show kinase activity with any other sugar. In Vibrio cholerae serotype O1 (strain ATCC 39315 / El Tor Inaba N16961), this protein is Glucosamine kinase GspK (gspK).